We begin with the raw amino-acid sequence, 144 residues long: Protein BUD31 homolog (144 aa).

Residues 2 to 10 (PKVRRSRKP) carry the Nuclear localization signal motif.

It belongs to the BUD31 (G10) family.

It is found in the nucleus. The sequence is that of Protein BUD31 homolog from Branchiostoma belcheri (Amphioxus).